The primary structure comprises 627 residues: Protein fem-1 homolog B (627 aa).

4 ANK repeats span residues 45-74 (QRST…VQTQ), 87-116 (DGAT…NVNH), 120-149 (TNST…NISI), and 153-182 (YDNT…DPNA). Residues His-185, Cys-186, and His-218 each coordinate Zn(2+). 2 ANK repeats span residues 186–215 (CGAT…AIVV) and 218–248 (HGMT…DRRS). The TPR repeat unit spans residues 344–377 (SHPIIYRGAVYADNMEFEQCIKLWLHALHLRQKG). ANK repeat units follow at residues 483–527 (EGFT…EVNA) and 531–568 (EGNS…HTDM).

It belongs to the fem-1 family. Component of a CRL2 E3 ubiquitin-protein ligase complex, also named ECS (Elongin BC-CUL2/5-SOCS-box protein) complex, composed of CUL2, Elongin BC (ELOB and ELOC), RBX1 and substrate-specific adapter FEM1B. Homooligomer. Interacts with PPM1F and PHTF1. Interacts with the death domain of FAS/TNFRSF6 and TNFRSF1A. Interacts with CHEK1. Interacts with NKX3-1. Present in adult testis (at protein level).

The protein resides in the cytoplasm. The protein localises to the nucleus. It functions in the pathway protein modification; protein ubiquitination. Its activity is regulated as follows. Activity of the CRL2(FEM1B) complex toward FNIP1 is inhibited by BEX family proteins (BEX1, BEX2, BEX3 and/or BEX4) in absence of reductive stress. Mechanistically, BEX proteins act as pseudosubstrate inhibitors that associate with FEM1B via zinc in absence of reductive stress, thereby preventing association between FEM1B and FNIP1. Functionally, substrate-recognition component of a Cul2-RING (CRL2) E3 ubiquitin-protein ligase complex of the DesCEND (destruction via C-end degrons) pathway, which recognizes a C-degron located at the extreme C terminus of target proteins, leading to their ubiquitination and degradation. The C-degron recognized by the DesCEND pathway is usually a motif of less than ten residues and can be present in full-length proteins, truncated proteins or proteolytically cleaved forms. The CRL2(FEM1B) complex specifically recognizes proteins ending with -Gly-Leu-Asp-Arg, such as CDK5R1, leading to their ubiquitination and degradation. Also acts as a regulator of the reductive stress response by mediating ubiquitination of reduced FNIP1: in response to reductive stress, the CRL2(FEM1B) complex specifically recognizes a conserved Cys degron in FNIP1 when this degron is reduced, leading to FNIP1 degradation and subsequent activation of mitochondria to recalibrate reactive oxygen species (ROS). Mechanistically, recognizes and binds reduced FNIP1 through two interface zinc ions, which act as a molecular glue that recruit reduced FNIP1 to FEM1B. Promotes ubiquitination of GLI1, suppressing GLI1 transcriptional activator activity. Promotes ubiquitination and degradation of ANKRD37. Promotes ubiquitination and degradation of SLBP. Involved in apoptosis by acting as a death receptor-associated protein that mediates apoptosis. Also involved in glucose homeostasis in pancreatic islet. May also act as an adapter/mediator in replication stress-induced signaling that leads to the activation of CHEK1. The protein is Protein fem-1 homolog B of Rattus norvegicus (Rat).